The primary structure comprises 291 residues: Light-independent protochlorophyllide reductase iron-sulfur ATP-binding protein (291 aa).

ATP is bound by residues 10–15 (GIGKST) and lysine 39. Serine 14 is a Mg(2+) binding site. [4Fe-4S] cluster-binding residues include cysteine 95 and cysteine 129. 180-181 (NR) contributes to the ATP binding site.

It belongs to the NifH/BchL/ChlL family. In terms of assembly, homodimer. Protochlorophyllide reductase is composed of three subunits; ChlL, ChlN and ChlB. [4Fe-4S] cluster serves as cofactor.

Its subcellular location is the plastid. It localises to the chloroplast. The catalysed reaction is chlorophyllide a + oxidized 2[4Fe-4S]-[ferredoxin] + 2 ADP + 2 phosphate = protochlorophyllide a + reduced 2[4Fe-4S]-[ferredoxin] + 2 ATP + 2 H2O. It participates in porphyrin-containing compound metabolism; chlorophyll biosynthesis (light-independent). In terms of biological role, component of the dark-operative protochlorophyllide reductase (DPOR) that uses Mg-ATP and reduced ferredoxin to reduce ring D of protochlorophyllide (Pchlide) to form chlorophyllide a (Chlide). This reaction is light-independent. The L component serves as a unique electron donor to the NB-component of the complex, and binds Mg-ATP. This Pinus thunbergii (Japanese black pine) protein is Light-independent protochlorophyllide reductase iron-sulfur ATP-binding protein.